A 147-amino-acid chain; its full sequence is 3-dehydroquinate dehydratase (147 aa).

Residue Y23 is the Proton acceptor of the active site. Substrate is bound by residues N74, H80, and D87. H100 functions as the Proton donor in the catalytic mechanism. Residues 101–102 (IS) and R111 contribute to the substrate site.

Belongs to the type-II 3-dehydroquinase family. In terms of assembly, homododecamer.

It catalyses the reaction 3-dehydroquinate = 3-dehydroshikimate + H2O. Its pathway is metabolic intermediate biosynthesis; chorismate biosynthesis; chorismate from D-erythrose 4-phosphate and phosphoenolpyruvate: step 3/7. Functionally, catalyzes a trans-dehydration via an enolate intermediate. The polypeptide is 3-dehydroquinate dehydratase (Prochlorococcus marinus (strain MIT 9215)).